Here is a 479-residue protein sequence, read N- to C-terminus: Aspartyl/glutamyl-tRNA(Asn/Gln) amidotransferase subunit B (479 aa).

This sequence belongs to the GatB/GatE family. GatB subfamily. In terms of assembly, heterotrimer of A, B and C subunits.

It carries out the reaction L-glutamyl-tRNA(Gln) + L-glutamine + ATP + H2O = L-glutaminyl-tRNA(Gln) + L-glutamate + ADP + phosphate + H(+). The catalysed reaction is L-aspartyl-tRNA(Asn) + L-glutamine + ATP + H2O = L-asparaginyl-tRNA(Asn) + L-glutamate + ADP + phosphate + 2 H(+). Allows the formation of correctly charged Asn-tRNA(Asn) or Gln-tRNA(Gln) through the transamidation of misacylated Asp-tRNA(Asn) or Glu-tRNA(Gln) in organisms which lack either or both of asparaginyl-tRNA or glutaminyl-tRNA synthetases. The reaction takes place in the presence of glutamine and ATP through an activated phospho-Asp-tRNA(Asn) or phospho-Glu-tRNA(Gln). The chain is Aspartyl/glutamyl-tRNA(Asn/Gln) amidotransferase subunit B from Streptococcus pyogenes serotype M6 (strain ATCC BAA-946 / MGAS10394).